The chain runs to 352 residues: Phosphoribosylformylglycinamidine cyclo-ligase (352 aa).

The protein belongs to the AIR synthase family.

The protein localises to the cytoplasm. The enzyme catalyses 2-formamido-N(1)-(5-O-phospho-beta-D-ribosyl)acetamidine + ATP = 5-amino-1-(5-phospho-beta-D-ribosyl)imidazole + ADP + phosphate + H(+). It functions in the pathway purine metabolism; IMP biosynthesis via de novo pathway; 5-amino-1-(5-phospho-D-ribosyl)imidazole from N(2)-formyl-N(1)-(5-phospho-D-ribosyl)glycinamide: step 2/2. This Nitrosospira multiformis (strain ATCC 25196 / NCIMB 11849 / C 71) protein is Phosphoribosylformylglycinamidine cyclo-ligase.